The primary structure comprises 635 residues: Protein OPG056 (635 aa).

The protein belongs to the orthopoxvirus OPG056 family. As to quaternary structure, interacts with protein OPG164. Interacts with protein OPG064.

It is found in the virion membrane. It localises to the host endosome. Its function is as follows. Plays a role in intracellular enveloped virus (IEV) transport to the cell surface through microtubule transport. Together with protein OPG064, forms a complex that interacts with host KLC2 (kinesin light chain isoform 2) to engage the kinesin-1 complex and thereby promote IEV trafficking. The chain is Protein OPG056 (OPG056) from Cynomys gunnisoni (Gunnison's prairie dog).